The chain runs to 265 residues: Transglycosylase (265 aa).

A slt-type domain region spans residues 19–98; it reads NLDPRLVAGV…NTALLAYHGG (80 aa). Residue glutamate 32 is part of the active site. The helical transmembrane segment at 219–239 threads the bilayer; the sequence is LRGVVIIAAVAIVVVGLYFLF.

Belongs to the transglycosylase Slt family. As to quaternary structure, heteromultimer composed of proteins P7 and P14.

The protein resides in the virion membrane. The catalysed reaction is Exolytic cleavage of the (1-&gt;4)-beta-glycosidic linkage between N-acetylmuramic acid (MurNAc) and N-acetylglucosamine (GlcNAc) residues in peptidoglycan, from either the reducing or the non-reducing ends of the peptidoglycan chains, with concomitant formation of a 1,6-anhydrobond in the MurNAc residue.. Component of the phage ejection machinery which acts as an exolysin. Muralytic protein involved in host peptidoglycan digestion necessary for viral DNA entry into the host cell. Its function is as follows. Does not display any enzymatic activity. Required for DNA injection in the membrane transformation event. Involved in the formation of the membrane tail tube to connect the virus interior with the host cytosol. Essential for viral infectivity. This chain is Transglycosylase (VII), found in Acinetobacter calcoaceticus (Arthrobacter siderocapsulatus).